The primary structure comprises 448 residues: UDP-N-acetylmuramoylalanine--D-glutamate ligase (448 aa).

Residue 116–122 (GSNAKST) coordinates ATP.

The protein belongs to the MurCDEF family.

Its subcellular location is the cytoplasm. The enzyme catalyses UDP-N-acetyl-alpha-D-muramoyl-L-alanine + D-glutamate + ATP = UDP-N-acetyl-alpha-D-muramoyl-L-alanyl-D-glutamate + ADP + phosphate + H(+). The protein operates within cell wall biogenesis; peptidoglycan biosynthesis. Functionally, cell wall formation. Catalyzes the addition of glutamate to the nucleotide precursor UDP-N-acetylmuramoyl-L-alanine (UMA). The protein is UDP-N-acetylmuramoylalanine--D-glutamate ligase of Pseudomonas savastanoi pv. phaseolicola (strain 1448A / Race 6) (Pseudomonas syringae pv. phaseolicola (strain 1448A / Race 6)).